Consider the following 261-residue polypeptide: 3-hydroxyacyl-CoA dehydrogenase type-2 (261 aa).

An N-acetylalanine modification is found at A2. NAD(+) contacts are provided by S20, L22, and D41. K53 carries the N6-acetyllysine; alternate modification. Residue K53 is modified to N6-succinyllysine; alternate. Residues D64 and V65 each contribute to the NAD(+) site. K69 is subject to N6-acetyllysine. NAD(+) is bound at residue C91. 2 positions are modified to N6-acetyllysine: K99 and K105. S155 contacts substrate. 4 residues coordinate NAD(+): Y168, K172, F201, and T203. Y168 acts as the Proton acceptor in catalysis. At K212 the chain carries N6-acetyllysine; alternate. Position 212 is an N6-succinyllysine; alternate (K212).

This sequence belongs to the short-chain dehydrogenases/reductases (SDR) family. As to quaternary structure, homotetramer. Component of mitochondrial ribonuclease P, a complex composed of TRMT10C/MRPP1, HSD17B10/MRPP2 and PRORP/MRPP3. Interacts with TRMT10C/MRPP1; forming the MRPP1-MRPP2 subcomplex of the mitochondrial ribonuclease P complex.

Its subcellular location is the mitochondrion. It is found in the mitochondrion matrix. The protein localises to the mitochondrion nucleoid. It carries out the reaction a (3S)-3-hydroxyacyl-CoA + NAD(+) = a 3-oxoacyl-CoA + NADH + H(+). The catalysed reaction is (2S,3S)-3-hydroxy-2-methylbutanoyl-CoA + NAD(+) = 2-methyl-3-oxobutanoyl-CoA + NADH + H(+). It catalyses the reaction testosterone + NAD(+) = androst-4-ene-3,17-dione + NADH + H(+). The enzyme catalyses 5alpha-androstane-3alpha,17beta-diol + NAD(+) = 17beta-hydroxy-5alpha-androstan-3-one + NADH + H(+). It carries out the reaction 17beta-estradiol + NAD(+) = estrone + NADH + H(+). The catalysed reaction is cholate + NAD(+) = 3alpha,12alpha-dihydroxy-7-oxo-5beta-cholanate + NADH + H(+). It catalyses the reaction (3S)-3-hydroxybutanoyl-CoA + NAD(+) = acetoacetyl-CoA + NADH + H(+). The enzyme catalyses (3S)-hydroxyoctanoyl-CoA + NAD(+) = 3-oxooctanoyl-CoA + NADH + H(+). It carries out the reaction (3S)-hydroxyhexadecanoyl-CoA + NAD(+) = 3-oxohexadecanoyl-CoA + NADH + H(+). The catalysed reaction is 17beta-hydroxy-5alpha-androstan-3-one + NAD(+) = 5alpha-androstan-3,17-dione + NADH + H(+). It catalyses the reaction 5alpha-pregnan-20beta-ol-3-one + NAD(+) = 5alpha-pregnane-3,20-dione + NADH + H(+). The enzyme catalyses 3alpha-hydroxy-5alpha-pregnan-20-one + NAD(+) = 5alpha-pregnane-3,20-dione + NADH + H(+). It carries out the reaction cortisone + NAD(+) = 17alpha-hydroxypregn-4-en-3,11,20-trione-21-al + NADH + H(+). The catalysed reaction is 11-dehydrocorticosterone + NAD(+) = pregn-4-ene-3,11,20,21-tetraone + NADH + H(+). It catalyses the reaction cortisol + NAD(+) = 11beta,17alpha-dihydroxypregn-4-ene-3,20,21-trione + NADH + H(+). The enzyme catalyses chenodeoxycholate + NAD(+) = 7-oxolithocholate + NADH + H(+). It carries out the reaction ursodeoxycholate + NAD(+) = 7-oxolithocholate + NADH + H(+). The catalysed reaction is 3beta,7beta-dihydroxy-5beta-cholan-24-oate + NAD(+) = 3beta-hydroxy-7-oxo-5beta-cholan-24-oate + NADH + H(+). It functions in the pathway amino-acid degradation; L-isoleucine degradation. Its pathway is lipid metabolism; fatty acid beta-oxidation. The protein operates within steroid metabolism. It participates in lipid metabolism; bile acid biosynthesis. In terms of biological role, mitochondrial dehydrogenase involved in pathways of fatty acid, branched-chain amino acid and steroid metabolism. Acts as (S)-3-hydroxyacyl-CoA dehydrogenase in mitochondrial fatty acid beta-oxidation, a major degradation pathway of fatty acids. Catalyzes the third step in the beta-oxidation cycle, namely the reversible conversion of (S)-3-hydroxyacyl-CoA to 3-ketoacyl-CoA. Preferentially accepts straight medium- and short-chain acyl-CoA substrates with highest efficiency for (3S)-hydroxybutanoyl-CoA. Acts as 3-hydroxy-2-methylbutyryl-CoA dehydrogenase in branched-chain amino acid catabolic pathway. Catalyzes the oxidation of 3-hydroxy-2-methylbutanoyl-CoA into 2-methyl-3-oxobutanoyl-CoA, a step in isoleucine degradation pathway. Has hydroxysteroid dehydrogenase activity toward steroid hormones and bile acids. Catalyzes the oxidation of 3alpha-, 17beta-, 20beta- and 21-hydroxysteroids and 7alpha- and 7beta-hydroxy bile acids. Oxidizes allopregnanolone/brexanolone at the 3alpha-hydroxyl group, which is known to be critical for the activation of gamma-aminobutyric acid receptors (GABAARs) chloride channel. Has phospholipase C-like activity toward cardiolipin and its oxidized species. Likely oxidizes the 2'-hydroxyl in the head group of cardiolipin to form a ketone intermediate that undergoes nucleophilic attack by water and fragments into diacylglycerol, dihydroxyacetone and orthophosphate. Has higher affinity for cardiolipin with oxidized fatty acids and may degrade these species during the oxidative stress response to protect cells from apoptosis. By interacting with intracellular amyloid-beta, it may contribute to the neuronal dysfunction associated with Alzheimer disease (AD). Essential for structural and functional integrity of mitochondria. In addition to mitochondrial dehydrogenase activity, moonlights as a component of mitochondrial ribonuclease P, a complex that cleaves tRNA molecules in their 5'-ends. Together with TRMT10C/MRPP1, forms a subcomplex of the mitochondrial ribonuclease P, named MRPP1-MRPP2 subcomplex, which displays functions that are independent of the ribonuclease P activity. The MRPP1-MRPP2 subcomplex catalyzes the formation of N(1)-methylguanine and N(1)-methyladenine at position 9 (m1G9 and m1A9, respectively) in tRNAs; HSD17B10/MRPP2 acting as a non-catalytic subunit. The MRPP1-MRPP2 subcomplex also acts as a tRNA maturation platform: following 5'-end cleavage by the mitochondrial ribonuclease P complex, the MRPP1-MRPP2 subcomplex enhances the efficiency of 3'-processing catalyzed by ELAC2, retains the tRNA product after ELAC2 processing and presents the nascent tRNA to the mitochondrial CCA tRNA nucleotidyltransferase TRNT1 enzyme. Associates with mitochondrial DNA complexes at the nucleoids to initiate RNA processing and ribosome assembly. This chain is 3-hydroxyacyl-CoA dehydrogenase type-2 (HSD17B10), found in Bos taurus (Bovine).